The following is a 538-amino-acid chain: Metal transporter Nramp5 (538 aa).

12 helical membrane-spanning segments follow: residues 44-64 (FLAHVGPGFMVSLAYLDPGNL), 77-97 (ELLWVILIGLIFALIIQSLAA), 118-138 (FVKIFLWLLAELAVIAADIPE), 140-160 (IGTAFAFNILFHIPVWVGVLI), 181-201 (FLISMLVFVMAACFFGELSIV), 227-247 (IALLGALVMPHNLFLHSALVL), 264-284 (FFLYESGFALFVALLINIAVV), 324-346 (SAIVYGVALLASGQSSTITGTYA), 365-385 (NLMTRTIAIAPSLIVSIIGGS), 391-411 (LIIIASMILSFELPFALIPLL), 427-447 (IYIIVFSWFLGLLIIGINMYF), and 467-487 (VLVGAAVFPFMLVYIVAVVYL). A disordered region spans residues 518-538 (AVDDDEPLPYRDDLADIPLPR).

It belongs to the NRAMP (TC 2.A.55) family.

It is found in the membrane. Its function is as follows. Probable metal transporter. This Oryza sativa subsp. japonica (Rice) protein is Metal transporter Nramp5 (NRAMP5).